The chain runs to 518 residues: Voltage-gated potassium channel regulatory subunit KCNG2 (518 aa).

Residues 1–214 lie on the Cytoplasmic side of the membrane; sequence MALLTGNADR…DMVENPHSGI (214 aa). Residues 215–236 traverse the membrane as a helical segment; it reads PGKIFACISISFVAITAVSLCI. The Extracellular segment spans residues 237–257; sequence STMPDVREEEDRGECSQKCYD. The helical transmembrane segment at 258 to 279 threads the bilayer; that stretch reads IFVLETVCVAWFSFEFLLRSIQ. At 280 to 290 the chain is on the cytoplasmic side; sequence AENKCAFLKTP. A helical transmembrane segment spans residues 291-311; sequence LNIIDILAILPFYISLIVDMA. Residues 312–331 lie on the Extracellular side of the membrane; that stretch reads STKNSSKPGGGAGNKYLERV. Residues 332–352 form a helical; Voltage-sensor membrane-spanning segment; sequence GLVLRFLRALRILYVMRLARH. At 353-367 the chain is on the cytoplasmic side; the sequence is SLGLQTLGLTVRRCT. A helical membrane pass occupies residues 368–389; it reads REFGLLLLFLCVAMALFSPLVY. Over 390 to 404 the chain is Extracellular; the sequence is LAESELGAKQEFTSI. The segment at residues 405 to 416 is an intramembrane region (helical); that stretch reads PTSYWWAVISMT. The Selectivity filter signature appears at 417–422; the sequence is TVGYGD. The stretch at 417-424 is an intramembrane region; sequence TVGYGDMV. The Extracellular segment spans residues 425–431; that stretch reads PRSIPGQ. A helical transmembrane segment spans residues 432-460; it reads VVALSSILSGILLMAFPVTSIFHTFSRSY. Residues 461-518 are Cytoplasmic-facing; sequence SELKEQQQRAASRQMHQLEESTKLAGGGSSQWITAASPPDAAREDGRPELDQEAKRSC. Positions 473–518 are disordered; it reads RQMHQLEESTKLAGGGSSQWITAASPPDAAREDGRPELDQEAKRSC. Positions 501-518 are enriched in basic and acidic residues; it reads AAREDGRPELDQEAKRSC.

The protein belongs to the potassium channel family. G (TC 1.A.1.2) subfamily. Kv6.2/KCNG2 sub-subfamily. In terms of assembly, heterodimer with KCNB1.

It localises to the cell membrane. Functionally, regulatory alpha-subunit of the voltage-gated potassium (Kv) channel which, when coassembled with KCNB1, can modulate the kinetics and conductance-voltage relationship. Modulates channel activity by shifting the threshold and the half-maximal activation to more negative values. Potassium channel subunit that does not form functional channels by itself. The polypeptide is Voltage-gated potassium channel regulatory subunit KCNG2 (Gallus gallus (Chicken)).